The following is a 214-amino-acid chain: uncharacterized protein (214 aa).

The active-site Proton acceptor is Tyr-129.

This sequence belongs to the NAD(P)-dependent epimerase/dehydratase family.

This is an uncharacterized protein from Bacillus subtilis (strain 168).